A 295-amino-acid chain; its full sequence is Glutamyl-Q tRNA(Asp) synthetase (295 aa).

L-glutamate is bound by residues 6-10 and Glu-42; that span reads RFAPS. Positions 9-19 match the 'HIGH' region motif; it reads PSPTGAMHLGN. Positions 93, 95, 118, and 122 each coordinate Zn(2+). 2 residues coordinate L-glutamate: Tyr-177 and Arg-195. A 'KMSKS' region motif is present at residues 233-237; it reads RLAKR. Position 236 (Lys-236) interacts with ATP.

This sequence belongs to the class-I aminoacyl-tRNA synthetase family. GluQ subfamily. Requires Zn(2+) as cofactor.

Its function is as follows. Catalyzes the tRNA-independent activation of glutamate in presence of ATP and the subsequent transfer of glutamate onto a tRNA(Asp). Glutamate is transferred on the 2-amino-5-(4,5-dihydroxy-2-cyclopenten-1-yl) moiety of the queuosine in the wobble position of the QUC anticodon. This is Glutamyl-Q tRNA(Asp) synthetase from Deinococcus radiodurans (strain ATCC 13939 / DSM 20539 / JCM 16871 / CCUG 27074 / LMG 4051 / NBRC 15346 / NCIMB 9279 / VKM B-1422 / R1).